Consider the following 388-residue polypeptide: Succinyl-diaminopimelate desuccinylase (388 aa).

His72 is a binding site for Zn(2+). Asp74 is an active-site residue. A Zn(2+)-binding site is contributed by Asp105. The active-site Proton acceptor is the Glu139. 3 residues coordinate Zn(2+): Glu140, Glu168, and His353.

Belongs to the peptidase M20A family. DapE subfamily. Homodimer. The cofactor is Zn(2+). Co(2+) is required as a cofactor.

The catalysed reaction is N-succinyl-(2S,6S)-2,6-diaminopimelate + H2O = (2S,6S)-2,6-diaminopimelate + succinate. It functions in the pathway amino-acid biosynthesis; L-lysine biosynthesis via DAP pathway; LL-2,6-diaminopimelate from (S)-tetrahydrodipicolinate (succinylase route): step 3/3. In terms of biological role, catalyzes the hydrolysis of N-succinyl-L,L-diaminopimelic acid (SDAP), forming succinate and LL-2,6-diaminopimelate (DAP), an intermediate involved in the bacterial biosynthesis of lysine and meso-diaminopimelic acid, an essential component of bacterial cell walls. This Orientia tsutsugamushi (strain Ikeda) (Rickettsia tsutsugamushi) protein is Succinyl-diaminopimelate desuccinylase.